Consider the following 512-residue polypeptide: MSMTICSNTPGAYPEIGAYNEVDKQLESSGFSSDSSLILNKPEVRQYWSSVSSHISRSGDVFTNDKEKISSSIGEDAMDIDASPSLIEKYNSFPTRKILPEQDEFENDVEDDASSSLKEKSQGSCEIEIASEISSEILNGTSADGNSEFHDFAEPPPSQNESVALSFSQSNDLDFLNNPSGSGSSNDINRSTSSISLPRHVSLDFNVYNSLCLTNEVTASESHNVAKFHLGKENKKSLLPRWKTIEMYGEVVKKTQDIYSNFQYAQYILRVGLDTEKLHELVKELEDESNSFTVDSLKEYLVNDAKVILKKLSAVGYPDAQYLLGDAYSSGVFGKIKNRRAFLLFSAAAKRLHIESVYRTAICYECGLGVTRNAPKAVNFLTFAATKNHPAAMYKLGVYSYHGLMGLPDDILTKMDGYRWLRRATSMASSFVCGAPFELANIYMTGYKDLIISDPDYAMALYEKAAALGHTESARILEDARRSGGFVSRGHPPSAQKYHKTSHEAVAAKKLI.

Residues 101-113 (EQDEFENDVEDDA) are compositionally biased toward acidic residues. Disordered stretches follow at residues 101-122 (EQDE…EKSQ) and 144-165 (DGNS…SVAL). Sel1-like repeat units follow at residues 318 to 353 (PDAQ…KRLH), 354 to 389 (IESV…TKNH), 390 to 429 (PAAM…SMAS), and 433 to 470 (CGAP…ALGH).

The protein belongs to the SKT5 family.

The protein resides in the cytoplasm. It localises to the cytoplasmic granule membrane. Functionally, required for the activation of chitin synthase III (CHS3) activity during the sporulation process. This chain is Protein SHC1 (SHC1), found in Saccharomyces cerevisiae (strain YJM789) (Baker's yeast).